A 102-amino-acid polypeptide reads, in one-letter code: UPF0213 protein XCC3072 (102 aa).

The region spanning 5-80 is the GIY-YIG domain; sequence KPWHLYLLLC…KQQPRARKLA (76 aa).

Belongs to the UPF0213 family.

This chain is UPF0213 protein XCC3072, found in Xanthomonas campestris pv. campestris (strain ATCC 33913 / DSM 3586 / NCPPB 528 / LMG 568 / P 25).